The primary structure comprises 545 residues: Putative serine/threonine-protein kinase L673 (545 aa).

Residues 13-125 enclose the Cyclin N-terminal domain; sequence RLGLVNWMLN…YKVYYLTIWK (113 aa). The region spanning 264-543 is the Protein kinase domain; that stretch reads IDFQNKLGSG…NCLKKIKESF (280 aa). ATP is bound by residues 270 to 278 and Lys-291; that span reads LGSGTYGSV. Asp-384 serves as the catalytic Proton acceptor.

This sequence belongs to the protein kinase superfamily. Ser/Thr protein kinase family.

The catalysed reaction is L-seryl-[protein] + ATP = O-phospho-L-seryl-[protein] + ADP + H(+). It catalyses the reaction L-threonyl-[protein] + ATP = O-phospho-L-threonyl-[protein] + ADP + H(+). This chain is Putative serine/threonine-protein kinase L673, found in Acanthamoeba polyphaga (Amoeba).